Reading from the N-terminus, the 197-residue chain is Peptide deformylase (197 aa).

Fe cation is bound by residues Cys-106 and His-148. The active site involves Glu-149. His-152 contacts Fe cation.

This sequence belongs to the polypeptide deformylase family. Fe(2+) is required as a cofactor.

The enzyme catalyses N-terminal N-formyl-L-methionyl-[peptide] + H2O = N-terminal L-methionyl-[peptide] + formate. Functionally, removes the formyl group from the N-terminal Met of newly synthesized proteins. Requires at least a dipeptide for an efficient rate of reaction. N-terminal L-methionine is a prerequisite for activity but the enzyme has broad specificity at other positions. This Mycolicibacterium smegmatis (strain ATCC 700084 / mc(2)155) (Mycobacterium smegmatis) protein is Peptide deformylase.